Consider the following 321-residue polypeptide: Phosphate metabolism protein 8 (321 aa).

The protein belongs to the SSM1 family.

Its function is as follows. May be involved in phosphate metabolism. The chain is Phosphate metabolism protein 8 (PHM8) from Saccharomyces cerevisiae (strain ATCC 204508 / S288c) (Baker's yeast).